A 63-amino-acid polypeptide reads, in one-letter code: uncharacterized protein (63 aa).

The helical transmembrane segment at 20–40 threads the bilayer; that stretch reads IVLLISFIFFFGRFIYSSVGA.

It is found in the membrane. This is an uncharacterized protein from Escherichia coli O157:H7.